The primary structure comprises 943 residues: Tyrosine-protein kinase transmembrane receptor ROR2 (943 aa).

Positions 1 to 33 (MARGSALPRRPLLCIPAVWAAAALLLSVSRTSG) are cleaved as a signal peptide. The Extracellular segment spans residues 34 to 403 (EVEVLDPNDP…CSPRDSSKMG (370 aa)). The region spanning 55–145 (PTLKGYFLNF…VATNGMKTIT (91 aa)) is the Ig-like C2-type domain. A glycan (N-linked (GlcNAc...) asparagine) is linked at Asn70. 9 cysteine pairs are disulfide-bonded: Cys83–Cys135, Cys174–Cys239, Cys182–Cys232, Cys223–Cys264, Cys252–Cys300, Cys256–Cys286, Cys316–Cys394, Cys337–Cys377, and Cys365–Cys389. In terms of domain architecture, FZ spans 169–303 (HEDGFCQPYR…SPDAANCMRI (135 aa)). N-linked (GlcNAc...) asparagine glycosylation is present at Asn188. The Kringle domain occupies 316-394 (CYNGSGMDYR…RMELCDVPSC (79 aa)). Asn318 is a glycosylation site (N-linked (GlcNAc...) asparagine). A helical membrane pass occupies residues 404 to 424 (ILYILVPSIAIPLVIACLFFL). Topologically, residues 425–943 (VCMCRNKQKA…VDEAQVQLEA (519 aa)) are cytoplasmic. 2 positions are modified to sulfoserine; partial: Ser469 and Ser471. A Protein kinase domain is found at 473 to 746 (VRFMEELGED…PRFKDIHSRL (274 aa)). ATP contacts are provided by residues 479–487 (LGEDRFGKV) and Lys507. The active-site Proton acceptor is the Asp615. Residue Tyr646 is modified to Phosphotyrosine; by autocatalysis. Disordered regions lie at residues 757-796 (SSAQTSGASNTTQTSSLSTSPVSNVSNARYVGPKQKAPPF) and 850-931 (QVPP…DCDT). Low complexity-rich tracts occupy residues 765–791 (SNTTQTSSLSTSPVSNVSNARYVGPKQ) and 857–872 (PKPSSHHSGSGSTSTG). Position 785 is an asymmetric dimethylarginine (Arg785). The span at 873–883 (YVTTAPSNTSM) shows a compositional bias: polar residues.

It belongs to the protein kinase superfamily. Tyr protein kinase family. ROR subfamily. Homodimer; promotes osteogenesis. Binds YWHAB. Interacts with WTIP. Interacts with ROR2. Requires Mg(2+) as cofactor.

Its subcellular location is the cell membrane. The enzyme catalyses L-tyrosyl-[protein] + ATP = O-phospho-L-tyrosyl-[protein] + ADP + H(+). Its function is as follows. Tyrosine-protein kinase receptor which may be involved in the early formation of the chondrocytes. It seems to be required for cartilage and growth plate development. Phosphorylates YWHAB, leading to induction of osteogenesis and bone formation. In contrast, has also been shown to have very little tyrosine kinase activity in vitro. May act as a receptor for wnt ligand WNT5A which may result in the inhibition of WNT3A-mediated signaling. The sequence is that of Tyrosine-protein kinase transmembrane receptor ROR2 (ROR2) from Homo sapiens (Human).